The following is a 458-amino-acid chain: Phenylalanine-specific permease (458 aa).

Over 1–27 (MKNASTVSEDTASNQEPTLHRGLHNRH) the chain is Cytoplasmic. Residues 28 to 48 (IQLIALGGAIGTGLFLGIGPA) form a helical membrane-spanning segment. The Periplasmic segment spans residues 49 to 50 (IQ). The chain crosses the membrane as a helical span at residues 51 to 71 (MAGPAVLLGYGVAGIIAFLIM). Topologically, residues 72–105 (RQLGEMVVEEPVSGSFAHFAYKYWGPFAGFLSGW) are cytoplasmic. The chain crosses the membrane as a helical span at residues 106–126 (NYWVMFVLVGMAELTAAGIYM). Residues 127–132 (QYWFPD) are Periplasmic-facing. The chain crosses the membrane as a helical span at residues 133–153 (VPTWIWAAAFFIIINAVNLVN). Over 154-160 (VRLYGET) the chain is Cytoplasmic. A helical membrane pass occupies residues 161-181 (EFWFALIKVLAIIGMIGFGLW). Topologically, residues 182 to 196 (LLFSGHGGEKASIDN) are periplasmic. A helical membrane pass occupies residues 197-217 (LWRYGGFFATGWNGLILSLAV). At 218-250 (IMFSFGGLELIGITAAEARDPEKSIPKAVNQVV) the chain is on the cytoplasmic side. The chain crosses the membrane as a helical span at residues 251–271 (YRILLFYIGSLVVLLALYPWV). Over 272–288 (EVKSNSSPFVMIFHNLD) the chain is Periplasmic. The helical transmembrane segment at 289-309 (SNVVASALNFVILVASLSVYN) threads the bilayer. Residues 310-341 (SGVYSNSRMLFGLSVQGNAPKFLTRVSRRGVP) are Cytoplasmic-facing. A helical transmembrane segment spans residues 342–362 (INSLMLSGAITSLVVLINYLL). At 363 to 367 (PQKAF) the chain is on the periplasmic side. The helical transmembrane segment at 368-388 (GLLMALVVATLLLNWIMICLA) threads the bilayer. Residues 389 to 411 (HLRFRAAMRRQGRETQFKALLYP) are Cytoplasmic-facing. A helical membrane pass occupies residues 412–432 (FGNYLCIAFLGMILLLMCTMD). The Periplasmic portion of the chain corresponds to 433 to 434 (DM). Residues 435 to 455 (RLSAILLPVWIVFLFMAFKTL) form a helical membrane-spanning segment. Residues 456-458 (RRK) lie on the Cytoplasmic side of the membrane.

The protein belongs to the amino acid-polyamine-organocation (APC) superfamily. Amino acid transporter (AAT) (TC 2.A.3.1) family.

Its subcellular location is the cell inner membrane. It carries out the reaction L-phenylalanine(in) + H(+)(in) = L-phenylalanine(out) + H(+)(out). Its function is as follows. Permease that is involved in the active transport across the cytoplasmic membrane of phenylalanine. Can also transport tyrosine, but not tryptophan. The protein is Phenylalanine-specific permease of Escherichia coli (strain K12).